The sequence spans 1012 residues: 5'-3' exoribonuclease 2 (1012 aa).

The CCHC-type zinc-finger motif lies at 264 to 281 (GKCFLCGQEGHRAADCEG). Disordered stretches follow at residues 411–439 (VQQRQSERFRRDKARDKARDNARDNAQAS), 888–976 (TFKD…QRQV), and 990–1012 (QRKKEKYLRKKAKYAQGAPPKTA). Basic and acidic residues predominate over residues 415-433 (QSERFRRDKARDKARDNAR). Over residues 904 to 914 (ITPKKMNSPQR) the composition is skewed to polar residues. Basic and acidic residues-rich tracts occupy residues 918–928 (WKKDETPQSRE) and 950–962 (PQREFTREKKKEN). The segment covering 990–1002 (QRKKEKYLRKKAK) has biased composition (basic residues).

This sequence belongs to the 5'-3' exonuclease family. XRN2/RAT1 subfamily. Expressed in roots, leaves, stems and flowers.

It is found in the nucleus. Functionally, possesses 5'-&gt;3' exoribonuclease activity. Acts as an endogenous post-transcriptional gene silencing (PTGS) suppressor. Degrades miRNA-derived loops, excised during miRNA maturation in the nucleus. Involved in pre-rRNA processing. Involved in the primary exonucleolytic shortening of the 5' external transcribed spacer (5'ETS), required for endonucleolytic processing at site P by the U3 snoRNP complex. Involved with XRN3 in the 5'-end processing of 5.8S and 25S rRNAs. Contributes with XRN3 to polyadenylation-dependent nuclear RNA surveillance. Involved in the degradation of aberrant polyadenylated pre-rRNA through 5'-end processing. The chain is 5'-3' exoribonuclease 2 from Arabidopsis thaliana (Mouse-ear cress).